We begin with the raw amino-acid sequence, 403 residues long: S-adenosylmethionine synthase (403 aa).

An ATP-binding site is contributed by His-22. Position 24 (Asp-24) interacts with Mg(2+). K(+) is bound at residue Glu-50. L-methionine-binding residues include Glu-63 and Gln-107. Residues 107 to 117 form a flexible loop region; sequence QSPDIAMGVDK. Residues 182–184, 248–249, Asp-257, 263–264, Ala-280, and Lys-284 each bind ATP; these read DAK, RF, and RK. Asp-257 is a binding site for L-methionine. Position 288 (Lys-288) interacts with L-methionine.

Belongs to the AdoMet synthase family. In terms of assembly, homotetramer; dimer of dimers. Mg(2+) serves as cofactor. The cofactor is K(+).

The protein resides in the cytoplasm. It carries out the reaction L-methionine + ATP + H2O = S-adenosyl-L-methionine + phosphate + diphosphate. It functions in the pathway amino-acid biosynthesis; S-adenosyl-L-methionine biosynthesis; S-adenosyl-L-methionine from L-methionine: step 1/1. Its function is as follows. Catalyzes the formation of S-adenosylmethionine (AdoMet) from methionine and ATP. The overall synthetic reaction is composed of two sequential steps, AdoMet formation and the subsequent tripolyphosphate hydrolysis which occurs prior to release of AdoMet from the enzyme. In Chloroflexus aurantiacus (strain ATCC 29366 / DSM 635 / J-10-fl), this protein is S-adenosylmethionine synthase.